Consider the following 117-residue polypeptide: Large ribosomal subunit protein bL20c (117 aa).

Belongs to the bacterial ribosomal protein bL20 family.

Its subcellular location is the plastid. It localises to the chloroplast. In terms of biological role, binds directly to 23S ribosomal RNA and is necessary for the in vitro assembly process of the 50S ribosomal subunit. It is not involved in the protein synthesizing functions of that subunit. This chain is Large ribosomal subunit protein bL20c, found in Arabis hirsuta (Hairy rock-cress).